A 166-amino-acid chain; its full sequence is ATP synthase subunit b (166 aa).

Residues 10-30 traverse the membrane as a helical segment; it reads LLFWMVIVFGIVFVILAKYGF.

The protein belongs to the ATPase B chain family. In terms of assembly, F-type ATPases have 2 components, F(1) - the catalytic core - and F(0) - the membrane proton channel. F(1) has five subunits: alpha(3), beta(3), gamma(1), delta(1), epsilon(1). F(0) has three main subunits: a(1), b(2) and c(10-14). The alpha and beta chains form an alternating ring which encloses part of the gamma chain. F(1) is attached to F(0) by a central stalk formed by the gamma and epsilon chains, while a peripheral stalk is formed by the delta and b chains.

It is found in the cell inner membrane. In terms of biological role, f(1)F(0) ATP synthase produces ATP from ADP in the presence of a proton or sodium gradient. F-type ATPases consist of two structural domains, F(1) containing the extramembraneous catalytic core and F(0) containing the membrane proton channel, linked together by a central stalk and a peripheral stalk. During catalysis, ATP synthesis in the catalytic domain of F(1) is coupled via a rotary mechanism of the central stalk subunits to proton translocation. Its function is as follows. Component of the F(0) channel, it forms part of the peripheral stalk, linking F(1) to F(0). The polypeptide is ATP synthase subunit b (Phocaeicola vulgatus (strain ATCC 8482 / DSM 1447 / JCM 5826 / CCUG 4940 / NBRC 14291 / NCTC 11154) (Bacteroides vulgatus)).